A 245-amino-acid chain; its full sequence is Pyridoxine 5'-phosphate synthase (245 aa).

N7 serves as a coordination point for 3-amino-2-oxopropyl phosphate. D9–H10 is a 1-deoxy-D-xylulose 5-phosphate binding site. R18 provides a ligand contact to 3-amino-2-oxopropyl phosphate. H43 acts as the Proton acceptor in catalysis. 1-deoxy-D-xylulose 5-phosphate-binding residues include R45 and H50. E70 functions as the Proton acceptor in the catalytic mechanism. Residue T100 coordinates 1-deoxy-D-xylulose 5-phosphate. Catalysis depends on H190, which acts as the Proton donor. 3-amino-2-oxopropyl phosphate is bound by residues G191 and G212–H213.

This sequence belongs to the PNP synthase family. As to quaternary structure, homooctamer; tetramer of dimers.

The protein resides in the cytoplasm. It catalyses the reaction 3-amino-2-oxopropyl phosphate + 1-deoxy-D-xylulose 5-phosphate = pyridoxine 5'-phosphate + phosphate + 2 H2O + H(+). It participates in cofactor biosynthesis; pyridoxine 5'-phosphate biosynthesis; pyridoxine 5'-phosphate from D-erythrose 4-phosphate: step 5/5. Its function is as follows. Catalyzes the complicated ring closure reaction between the two acyclic compounds 1-deoxy-D-xylulose-5-phosphate (DXP) and 3-amino-2-oxopropyl phosphate (1-amino-acetone-3-phosphate or AAP) to form pyridoxine 5'-phosphate (PNP) and inorganic phosphate. This is Pyridoxine 5'-phosphate synthase from Prochlorococcus marinus (strain NATL1A).